The following is a 34-amino-acid chain: Photosystem II reaction center protein Psb30 (34 aa).

The chain crosses the membrane as a helical span at residues 5–25 (VLAQLTVLAFVIAVGPITLIW).

The protein belongs to the Psb30/Ycf12 family. As to quaternary structure, PSII is composed of 1 copy each of membrane proteins PsbA, PsbB, PsbC, PsbD, PsbE, PsbF, PsbH, PsbI, PsbJ, PsbK, PsbL, PsbM, PsbT, PsbX, PsbY, PsbZ, Psb30/Ycf12, peripheral proteins of the oxygen-evolving complex and a large number of cofactors. It forms dimeric complexes.

The protein localises to the plastid. It is found in the chloroplast thylakoid membrane. Its function is as follows. A core subunit of photosystem II (PSII), probably helps stabilize the reaction center. This chain is Photosystem II reaction center protein Psb30, found in Cyanidioschyzon merolae (strain NIES-3377 / 10D) (Unicellular red alga).